Consider the following 314-residue polypeptide: Acetyl-coenzyme A carboxylase carboxyl transferase subunit alpha (314 aa).

A CoA carboxyltransferase C-terminal domain is found at 32–289 (EIDMLEASLK…KKMFLKHLNE (258 aa)).

The protein belongs to the AccA family. In terms of assembly, acetyl-CoA carboxylase is a heterohexamer composed of biotin carboxyl carrier protein (AccB), biotin carboxylase (AccC) and two subunits each of ACCase subunit alpha (AccA) and ACCase subunit beta (AccD).

It localises to the cytoplasm. It catalyses the reaction N(6)-carboxybiotinyl-L-lysyl-[protein] + acetyl-CoA = N(6)-biotinyl-L-lysyl-[protein] + malonyl-CoA. It participates in lipid metabolism; malonyl-CoA biosynthesis; malonyl-CoA from acetyl-CoA: step 1/1. Functionally, component of the acetyl coenzyme A carboxylase (ACC) complex. First, biotin carboxylase catalyzes the carboxylation of biotin on its carrier protein (BCCP) and then the CO(2) group is transferred by the carboxyltransferase to acetyl-CoA to form malonyl-CoA. This Staphylococcus epidermidis (strain ATCC 35984 / DSM 28319 / BCRC 17069 / CCUG 31568 / BM 3577 / RP62A) protein is Acetyl-coenzyme A carboxylase carboxyl transferase subunit alpha.